The sequence spans 194 residues: Naphthalene 1,2-dioxygenase system, small oxygenase component (194 aa).

This sequence belongs to the bacterial ring-hydroxylating dioxygenase beta subunit family. The naphthalene dioxygenase (NDO) multicomponent enzyme system is composed of an electron transfer component and a dioxygenase component (iron sulfur protein (ISP)). The electron transfer component is composed of a ferredoxin reductase (NdoR) and a ferredoxin (NdoA), and the dioxygenase component is formed of a heterohexamer (trimer of heterodimers) of three large alpha subunits (NdoB) and three small beta subunits (NdoC).

It participates in aromatic compound metabolism; naphthalene degradation. Functionally, component of the naphthalene dioxygenase (NDO) multicomponent enzyme system which catalyzes the incorporation of both atoms of molecular oxygen into naphthalene to form cis-(1R,2S)-dihydroxy-1,2-dihydronaphthalene. The beta subunit seems to have a structural role in the holoenzyme. Also able to catalyze the cis-dihydroxylation of biphenyl and phenanthrene. This is Naphthalene 1,2-dioxygenase system, small oxygenase component from Pseudomonas putida (Arthrobacter siderocapsulatus).